An 87-amino-acid chain; its full sequence is CRISPR-associated endoribonuclease Cas2 (87 aa).

Asp8 is a Mg(2+) binding site.

Belongs to the CRISPR-associated endoribonuclease Cas2 protein family. In terms of assembly, homodimer, forms a heterotetramer with a Cas1 homodimer. It depends on Mg(2+) as a cofactor.

Its function is as follows. CRISPR (clustered regularly interspaced short palindromic repeat), is an adaptive immune system that provides protection against mobile genetic elements (viruses, transposable elements and conjugative plasmids). CRISPR clusters contain sequences complementary to antecedent mobile elements and target invading nucleic acids. CRISPR clusters are transcribed and processed into CRISPR RNA (crRNA). Functions as a ssRNA-specific endoribonuclease. Involved in the integration of spacer DNA into the CRISPR cassette. The chain is CRISPR-associated endoribonuclease Cas2 from Methanosarcina acetivorans (strain ATCC 35395 / DSM 2834 / JCM 12185 / C2A).